We begin with the raw amino-acid sequence, 283 residues long: Elongation factor Ts (283 aa).

The segment at 80 to 83 (TDFV) is involved in Mg(2+) ion dislocation from EF-Tu.

The protein belongs to the EF-Ts family.

It localises to the cytoplasm. Functionally, associates with the EF-Tu.GDP complex and induces the exchange of GDP to GTP. It remains bound to the aminoacyl-tRNA.EF-Tu.GTP complex up to the GTP hydrolysis stage on the ribosome. The polypeptide is Elongation factor Ts (Pectobacterium carotovorum subsp. carotovorum (strain PC1)).